The primary structure comprises 200 residues: Transcription factor FapR (200 aa).

The protein belongs to the FapR family.

Its function is as follows. Transcriptional factor involved in regulation of membrane lipid biosynthesis by repressing genes involved in fatty acid and phospholipid metabolism. The polypeptide is Transcription factor FapR (Thermoanaerobacter pseudethanolicus (strain ATCC 33223 / 39E) (Clostridium thermohydrosulfuricum)).